Here is a 1247-residue protein sequence, read N- to C-terminus: ABC transporter B family member 14 (1247 aa).

In terms of domain architecture, ABC transmembrane type-1 1 spans 48-337; that stretch reads MFLGGLGTCI…AVPSLSAISK (290 aa). A run of 6 helical transmembrane segments spans residues 49 to 69, 95 to 115, 172 to 192, 196 to 216, 277 to 297, and 315 to 335; these read FLGG…FVFF, LYLV…VACW, HVLR…LSVW, LLTL…AIVM, LGVG…FWYA, and ILNV…LSAI. Residues N362 and N392 are each glycosylated (N-linked (GlcNAc...) asparagine). Residues 373-608 enclose the ABC transporter 1 domain; sequence IEFCGVSFAY…GGDYATLVNC (236 aa). An ATP-binding site is contributed by 407-414; sequence GPSGSGKS. Residues 679–971 enclose the ABC transmembrane type-1 2 domain; the sequence is EWLYALLGSI…TLALTPDIVK (293 aa). The next 2 helical transmembrane spans lie at 680-700 and 727-747; these read WLYA…PALF and AIIF…QHYF. N780 is a glycosylation site (N-linked (GlcNAc...) asparagine). 3 helical membrane-spanning segments follow: residues 807 to 824, 830 to 850, and 915 to 935; these read IVQN…AFFY, AVVT…QLFL, and LSQC…SVLI. N-linked (GlcNAc...) asparagine glycosylation occurs at N938. A helical membrane pass occupies residues 949–969; sequence FMVLLVTAYSVAETLALTPDI. The 237-residue stretch at 1006–1242 folds into the ABC transporter 2 domain; that stretch reads IEFRNVSFAY…SDGFYKKLTS (237 aa). N-linked (GlcNAc...) asparagine glycosylation occurs at N1010. Residue 1041 to 1048 coordinates ATP; the sequence is GPSGSGKS. N-linked (GlcNAc...) asparagine glycosylation occurs at N1108.

This sequence belongs to the ABC transporter superfamily. ABCB family. Multidrug resistance exporter (TC 3.A.1.201) subfamily.

The protein resides in the membrane. The protein is ABC transporter B family member 14 (ABCB14) of Arabidopsis thaliana (Mouse-ear cress).